We begin with the raw amino-acid sequence, 1998 residues long: Receptor-type tyrosine-protein phosphatase beta (1998 aa).

The signal sequence occupies residues 1-22 (MLRHGALTALWITLSVVQTGVA). Fibronectin type-III domains follow at residues 23–109 (EQVK…VLQT), 113–206 (PPAR…VPSP), 207–291 (VKDL…TAPM), 292–384 (EVSN…VRNL), 378–466 (PEKV…QGRT), 470–556 (AVLQ…TVPA), 557–642 (QVTD…EGRT), 643–733 (VPSS…TVPD), 734–821 (KVQG…TIPE), 822–913 (PVKD…TVKN), 908–994 (PSTV…LGQT), 995–1088 (VPAS…VPAA), 1086–1173 (PAAV…GRTV), 1176–1263 (AVNH…TAPS), 1264–1357 (PPSL…TKPD), 1358–1449 (KIQN…IDRP), and 1449–1551 (PPQP…KLGA). The Extracellular portion of the chain corresponds to 23–1622 (EQVKCNFTLL…ESEPLFGVIE (1600 aa)). N28, N53, N75, N173, N199, and N268 each carry an N-linked (GlcNAc...) asparagine glycan. N-linked (GlcNAc...) asparagine glycosylation is found at N415, N422, N480, N575, N599, and N653. N-linked (GlcNAc...) asparagine glycosylation occurs at N830. 10 N-linked (GlcNAc...) asparagine glycosylation sites follow: N1041, N1097, N1164, N1186, N1213, N1275, N1368, N1471, N1475, and N1519. A helical transmembrane segment spans residues 1623–1643 (GVSAGLFLIGMLVALVAFFIC). Residues 1644 to 1997 (RQKASHSRER…EYHRDAIYSR (354 aa)) are Cytoplasmic-facing. The Tyrosine-protein phosphatase domain maps to 1704–1964 (LSKEYEDLKD…VYLHQCVRDV (261 aa)). Substrate is bound by residues D1871, 1905 to 1911 (CSAGVGR), and Q1949. Residue C1905 is the Phosphocysteine intermediate of the active site. Position 1982 is a phosphotyrosine (Y1982).

Belongs to the protein-tyrosine phosphatase family. Receptor class 3 subfamily. Monomer. Interacts with TEK. Interacts via fibronectin type-III 17 domain with CDH5. Detected in a complex with CNTN1 and NRCAM. Interacts (phosphorylated form) with FYN and GRB2. Interacts with IGFBP2. In terms of tissue distribution, expression is very high in the vasculature of lung, spleen, and kidney, as well as in the heart valves, and is also present in the endothelium of arterioles and venules. Also expressed in tumor vasculature.

It is found in the membrane. It catalyses the reaction O-phospho-L-tyrosyl-[protein] + H2O = L-tyrosyl-[protein] + phosphate. Functionally, plays an important role in blood vessel remodeling and angiogenesis. Not necessary for the initial formation of blood vessels, but is essential for their maintenance and remodeling. Can induce dephosphorylation of TEK/TIE2, CDH5/VE-cadherin and KDR/VEGFR-2. Regulates angiopoietin-TIE2 signaling in endothelial cells. Acts as a negative regulator of TIE2, and controls TIE2 driven endothelial cell proliferation, which in turn affects blood vessel remodeling during embryonic development and determines blood vessel size during perinatal growth. Essential for the maintenance of endothelial cell contact integrity and for the adhesive function of VE-cadherin in endothelial cells and this requires the presence of plakoglobin. The protein is Receptor-type tyrosine-protein phosphatase beta (Ptprb) of Mus musculus (Mouse).